Consider the following 347-residue polypeptide: Protein RecA (347 aa).

64–71 provides a ligand contact to ATP; that stretch reads GPESSGKT.

Belongs to the RecA family.

The protein localises to the cytoplasm. Its function is as follows. Can catalyze the hydrolysis of ATP in the presence of single-stranded DNA, the ATP-dependent uptake of single-stranded DNA by duplex DNA, and the ATP-dependent hybridization of homologous single-stranded DNAs. It interacts with LexA causing its activation and leading to its autocatalytic cleavage. This chain is Protein RecA, found in Bartonella bacilliformis (strain ATCC 35685 / KC583 / Herrer 020/F12,63).